Reading from the N-terminus, the 321-residue chain is Protease HtpX homolog (321 aa).

2 helical membrane-spanning segments follow: residues 6 to 26 (TAMLLAFMTALFMGVGFLIGG) and 28 to 48 (GGMMIALLIAAGMNLFSYWNS). His130 lines the Zn(2+) pocket. Residue Glu131 is part of the active site. His134 lines the Zn(2+) pocket. Transmembrane regions (helical) follow at residues 145–165 (ITATLAGAISMLGNFAFFFGG) and 173–193 (PLGFIGVLVAMIVAPLAAMLV). Glu202 serves as a coordination point for Zn(2+). Positions 281-321 (EFSPRASTPPPSGDRPVRKSGSVPTTGWRRGNENERKGPWS) are disordered. Residues 310–321 (RGNENERKGPWS) show a composition bias toward basic and acidic residues.

This sequence belongs to the peptidase M48B family. Zn(2+) serves as cofactor.

The protein resides in the cell inner membrane. The sequence is that of Protease HtpX homolog from Agrobacterium fabrum (strain C58 / ATCC 33970) (Agrobacterium tumefaciens (strain C58)).